The following is a 245-amino-acid chain: 1-(5-phosphoribosyl)-5-[(5-phosphoribosylamino)methylideneamino] imidazole-4-carboxamide isomerase (245 aa).

The Proton acceptor role is filled by Asp8. The active-site Proton donor is Asp130.

It belongs to the HisA/HisF family.

The protein localises to the cytoplasm. The catalysed reaction is 1-(5-phospho-beta-D-ribosyl)-5-[(5-phospho-beta-D-ribosylamino)methylideneamino]imidazole-4-carboxamide = 5-[(5-phospho-1-deoxy-D-ribulos-1-ylimino)methylamino]-1-(5-phospho-beta-D-ribosyl)imidazole-4-carboxamide. Its pathway is amino-acid biosynthesis; L-histidine biosynthesis; L-histidine from 5-phospho-alpha-D-ribose 1-diphosphate: step 4/9. In Ectopseudomonas mendocina (strain ymp) (Pseudomonas mendocina), this protein is 1-(5-phosphoribosyl)-5-[(5-phosphoribosylamino)methylideneamino] imidazole-4-carboxamide isomerase.